A 429-amino-acid polypeptide reads, in one-letter code: Maltoporin 2 (429 aa).

An N-terminal signal peptide occupies residues 1 to 25; it reads MMITLRKLPLAVAVAAGVMSAQALA. The span at 397-412 shows a compositional bias: polar residues; it reads GLQTKDSSGSGAFTSS. Positions 397–416 are disordered; sequence GLQTKDSSGSGAFTSSRGDD.

The protein belongs to the porin LamB (TC 1.B.3) family. Homotrimer formed of three 18-stranded antiparallel beta-barrels, containing three independent channels.

Its subcellular location is the cell outer membrane. It carries out the reaction beta-maltose(in) = beta-maltose(out). In terms of biological role, involved in the transport of maltose and maltodextrins. The protein is Maltoporin 2 of Klebsiella pneumoniae subsp. pneumoniae (strain ATCC 700721 / MGH 78578).